Here is a 76-residue protein sequence, read N- to C-terminus: Acyl carrier protein (76 aa).

Residues 1–74 (MEERIKEIIA…DVINYIKEKK (74 aa)) enclose the Carrier domain. Position 34 is an O-(pantetheine 4'-phosphoryl)serine (Ser34).

This sequence belongs to the acyl carrier protein (ACP) family. 4'-phosphopantetheine is transferred from CoA to a specific serine of apo-ACP by AcpS. This modification is essential for activity because fatty acids are bound in thioester linkage to the sulfhydryl of the prosthetic group.

It is found in the cytoplasm. Its pathway is lipid metabolism; fatty acid biosynthesis. Functionally, carrier of the growing fatty acid chain in fatty acid biosynthesis. The chain is Acyl carrier protein from Persephonella marina (strain DSM 14350 / EX-H1).